The following is a 220-amino-acid chain: Vesicle-associated membrane protein 7 (220 aa).

Ala-2 bears the N-acetylalanine mark. Residues 2-188 are Cytoplasmic-facing; it reads AILFAVVARG…ARAMCMKNLK (187 aa). One can recognise a Longin domain in the interval 7-110; sequence VVARGTTILA…AMNSEFSSVL (104 aa). In terms of domain architecture, v-SNARE coiled-coil homology spans 125–185; sequence KVMETQAQVD…RNLARAMCMK (61 aa). A phosphoserine mark is found at Ser-167 and Ser-168. Residues 189 to 209 traverse the membrane as a helical; Anchor for type IV membrane protein segment; the sequence is LTIIIIIISVVFIYIIVSPLC. Residues 210–220 are Vesicular-facing; the sequence is GGFTWPNCVKK.

It belongs to the synaptobrevin family. As to quaternary structure, component of the SNARE complex composed of STX4, SNAP23 and VAMP7 that binds SYT7 during lysosomal exocytosis. Component of the SNARE complex composed of STX7, STX8, VAMP7 and VTI1B that is required for heterotypic fusion of late endosomes with lysosomes. May interact with STX17. Interacts with PICALM. Interacts with RAB21.

The protein localises to the cytoplasmic vesicle. Its subcellular location is the secretory vesicle membrane. The protein resides in the golgi apparatus. It localises to the trans-Golgi network membrane. It is found in the late endosome membrane. The protein localises to the lysosome membrane. Its subcellular location is the endoplasmic reticulum membrane. The protein resides in the phagosome membrane. It localises to the synapse. It is found in the synaptosome. Involved in the targeting and/or fusion of transport vesicles to their target membrane during transport of proteins from the early endosome to the lysosome. Required for heterotypic fusion of late endosomes with lysosomes and homotypic lysosomal fusion. Required for calcium regulated lysosomal exocytosis. Involved in the export of chylomicrons from the endoplasmic reticulum to the cis Golgi. Required for exocytosis of mediators during eosinophil and neutrophil degranulation, and target cell killing by natural killer cells. Required for focal exocytosis of late endocytic vesicles during phagosome formation. The chain is Vesicle-associated membrane protein 7 (VAMP7) from Bos taurus (Bovine).